The chain runs to 185 residues: Adenine phosphoribosyltransferase (185 aa).

Belongs to the purine/pyrimidine phosphoribosyltransferase family. Homodimer.

It localises to the cytoplasm. It catalyses the reaction AMP + diphosphate = 5-phospho-alpha-D-ribose 1-diphosphate + adenine. Its pathway is purine metabolism; AMP biosynthesis via salvage pathway; AMP from adenine: step 1/1. Its function is as follows. Catalyzes a salvage reaction resulting in the formation of AMP, that is energically less costly than de novo synthesis. The polypeptide is Adenine phosphoribosyltransferase (Nocardioides sp. (strain ATCC BAA-499 / JS614)).